The primary structure comprises 96 residues: Co-chaperonin GroES (96 aa).

It belongs to the GroES chaperonin family. As to quaternary structure, heptamer of 7 subunits arranged in a ring. Interacts with the chaperonin GroEL.

The protein localises to the cytoplasm. Its function is as follows. Together with the chaperonin GroEL, plays an essential role in assisting protein folding. The GroEL-GroES system forms a nano-cage that allows encapsulation of the non-native substrate proteins and provides a physical environment optimized to promote and accelerate protein folding. GroES binds to the apical surface of the GroEL ring, thereby capping the opening of the GroEL channel. The sequence is that of Co-chaperonin GroES from Buchnera aphidicola subsp. Myzus persicae (Myzus persicae primary endosymbiont).